The following is a 258-amino-acid chain: uncharacterized protein (258 aa).

6 helical membrane passes run 21–41, 73–93, 119–139, 153–173, 182–202, and 229–249; these read LIWL…TIYY, LSQF…GSVA, WLIQ…LAYY, FAAS…AGLA, GAAA…VSLF, and FFGW…VFSV.

It is found in the cell membrane. This is an uncharacterized protein from Bacillus subtilis (strain 168).